We begin with the raw amino-acid sequence, 342 residues long: Ankyrin repeat domain-containing protein 2A (342 aa).

The disordered stretch occupies residues 1–41; sequence MASNSEKNPLLSDEKPKSTEENKSSKPESASGSSTSSAMPG. The span at 12–26 shows a compositional bias: basic and acidic residues; that stretch reads SDEKPKSTEENKSSK. Residues 27–37 are compositionally biased toward low complexity; sequence PESASGSSTSS. 4 ANK repeats span residues 217-246, 250-279, 283-312, and 316-342; these read EEES…NKDE, EGRT…SVNA, NKNT…AVTL, and DEKT…DAFL. The a 1,2-diacyl-3-O-(beta-D-galactosyl)-sn-glycerol site is built by H223 and E246. Residues Y294 and R296 each coordinate a 1,2-diacyl-sn-glycero-3-phospho-(1'-sn-glycerol).

As to quaternary structure, interacts with TOM20-4, CYTB5-E, CBR1, APX3, APX5, TOC34 and GRF6. Binds to chloroplast outer envelope membrane (OEM) protein targeting signals, as well as to chloroplasts. Interacts with OEP7. Binds to HSP17.8 via its ankyrin repeats, this interaction enhances chaperone activity and chloroplast binding. Also interacts with HSP17.4A, HSP17.6A and HSP18.1. Binds specifically to two chloroplast glycolipids, monogalactosyldiacylglycerol (MGDG) and phosphatidylglycerol (PG). As to expression, ubiquitously expressed at basal level.

It is found in the cytoplasm. The protein resides in the nucleus. The protein localises to the plastid. It localises to the chloroplast outer membrane. Exhibits chaperone activity toward chloroplast outer envelope membrane, mitochondrion outer membrane, endoplasmic reticulum membrane and peroxisomal proteins, by recruiting specific proteins containing a single transmembrane associated with an AKR2A-binding sequence (ABS) and subsequently binding glycolipids (e.g. monogalactosyldiacylglycerol (MGDG) and phosphatidylglycerol (PG)) present in the membrane of the target organelle. Seems to be involved in the regulation of hydrogen peroxide levels during biotic and abiotic stresses by optimizing the ascorbate peroxidase 3 (APX3) hydrogen peroxide-degrading activity. This regulation might be monitored by GRF6. Cytosolic targeting factor for chloroplast outer membrane (COM) proteins that mediates sorting and targeting of nascent chloroplast outer envelope membrane (OEM) proteins to the chloroplast. Facilitates the targeting of OEP7 to chloroplasts. Facilitates the targeting of APX3 to peroxisomes. Involved in cellular metabolism (e.g. peroxisome activity) and required for plant growth and development. In Arabidopsis thaliana (Mouse-ear cress), this protein is Ankyrin repeat domain-containing protein 2A.